Consider the following 189-residue polypeptide: Putative biopolymer transport protein ExbB-like 1 (189 aa).

The next 3 membrane-spanning stretches (helical) occupy residues 14–34 (FVTT…LWVF), 99–119 (LVVL…GTVV), and 147–167 (LIAT…YLIL).

Belongs to the ExbB/TolQ family.

The protein resides in the cell inner membrane. The sequence is that of Putative biopolymer transport protein ExbB-like 1 from Helicobacter pylori (strain ATCC 700392 / 26695) (Campylobacter pylori).